The sequence spans 255 residues: ATP synthase subunit a (255 aa).

A propeptide spans M1–I7 (removed in mature form). Helical transmembrane passes span F35–Y55, Y91–I111, H120–F140, F147–I167, V177–L197, and G208–L228.

The protein belongs to the ATPase A chain family. In terms of assembly, F-type ATPases have 2 components, CF(1) - the catalytic core - and CF(0) - the membrane proton channel. CF(1) has five subunits: alpha(3), beta(3), gamma(1), delta(1), epsilon(1). CF(0) has three main subunits: a, b and c.

The protein localises to the mitochondrion inner membrane. Functionally, mitochondrial membrane ATP synthase (F(1)F(0) ATP synthase or Complex V) produces ATP from ADP in the presence of a proton gradient across the membrane which is generated by electron transport complexes of the respiratory chain. F-type ATPases consist of two structural domains, F(1) - containing the extramembraneous catalytic core and F(0) - containing the membrane proton channel, linked together by a central stalk and a peripheral stalk. During catalysis, ATP synthesis in the catalytic domain of F(1) is coupled via a rotary mechanism of the central stalk subunits to proton translocation. Key component of the proton channel; it may play a direct role in the translocation of protons across the membrane. The protein is ATP synthase subunit a (ATP6) of Trichophyton rubrum (Athlete's foot fungus).